The sequence spans 78 residues: Small ribosomal subunit protein uS17 (78 aa).

The protein belongs to the universal ribosomal protein uS17 family. Part of the 30S ribosomal subunit.

In terms of biological role, one of the primary rRNA binding proteins, it binds specifically to the 5'-end of 16S ribosomal RNA. The polypeptide is Small ribosomal subunit protein uS17 (Sinorhizobium medicae (strain WSM419) (Ensifer medicae)).